A 175-amino-acid chain; its full sequence is NADH-ubiquinone oxidoreductase chain 6 (175 aa).

5 consecutive transmembrane segments (helical) span residues M1 to S21, S25 to L45, F47 to V67, V88 to L108, and Y149 to M169.

This sequence belongs to the complex I subunit 6 family. As to quaternary structure, core subunit of respiratory chain NADH dehydrogenase (Complex I) which is composed of 45 different subunits.

The protein localises to the mitochondrion inner membrane. The enzyme catalyses a ubiquinone + NADH + 5 H(+)(in) = a ubiquinol + NAD(+) + 4 H(+)(out). Its function is as follows. Core subunit of the mitochondrial membrane respiratory chain NADH dehydrogenase (Complex I) which catalyzes electron transfer from NADH through the respiratory chain, using ubiquinone as an electron acceptor. Essential for the catalytic activity and assembly of complex I. The protein is NADH-ubiquinone oxidoreductase chain 6 (MT-ND6) of Ovis aries (Sheep).